Here is an 842-residue protein sequence, read N- to C-terminus: Elongation factor 2 (842 aa).

Residues 17–253 (TNVRNMSVIA…LWGDSYFNPK (237 aa)) form the tr-type G domain. Residues 26 to 33 (AHVDHGKS), 158 to 161 (NKVD), and 213 to 215 (SGL) each bind GTP. The residue at position 699 (His699) is a Diphthamide.

It belongs to the TRAFAC class translation factor GTPase superfamily. Classic translation factor GTPase family. EF-G/EF-2 subfamily.

It localises to the cytoplasm. The enzyme catalyses GTP + H2O = GDP + phosphate + H(+). Functionally, catalyzes the GTP-dependent ribosomal translocation step during translation elongation. During this step, the ribosome changes from the pre-translocational (PRE) to the post-translocational (POST) state as the newly formed A-site-bound peptidyl-tRNA and P-site-bound deacylated tRNA move to the P and E sites, respectively. Catalyzes the coordinated movement of the two tRNA molecules, the mRNA and conformational changes in the ribosome. The protein is Elongation factor 2 (EFT1) of Eremothecium gossypii (strain ATCC 10895 / CBS 109.51 / FGSC 9923 / NRRL Y-1056) (Yeast).